We begin with the raw amino-acid sequence, 673 residues long: L-type lectin-domain containing receptor kinase SIT2 (673 aa).

The signal sequence occupies residues 1–27; the sequence is MVLPKPEMPFFVLLLFLGLGCLRPAAA. Residues 28–296 are Extracellular-facing; that stretch reads TDERFVFNGF…FPKPRSKTLE (269 aa). The tract at residues 32–270 is legume-lectin like; the sequence is FVFNGFTGAN…VLGWSFKMNG (239 aa). N-linked (GlcNAc...) asparagine glycosylation is found at Asn-41, Asn-60, Asn-82, Asn-118, Asn-138, Asn-191, Asn-214, Asn-235, and Asn-276. Residues 297–317 traverse the membrane as a helical segment; the sequence is IVLPIASAVLVFAVAAAVFVF. Topologically, residues 318–673 are cytoplasmic; that stretch reads MRRRRMFSEL…GTFSDLSGGR (356 aa). The Protein kinase domain occupies 352-631; that stretch reads FSDKRLLGIG…LEGDVPLPEL (280 aa). Residues 358 to 366 and Lys-381 contribute to the ATP site; that span reads LGIGGFGRV. Asp-477 (proton acceptor) is an active-site residue.

The protein in the C-terminal section; belongs to the protein kinase superfamily. Ser/Thr protein kinase family. This sequence in the N-terminal section; belongs to the leguminous lectin family. As to expression, mainly expressed in root epidermal cells.

Its subcellular location is the cell membrane. It catalyses the reaction L-seryl-[protein] + ATP = O-phospho-L-seryl-[protein] + ADP + H(+). It carries out the reaction L-threonyl-[protein] + ATP = O-phospho-L-threonyl-[protein] + ADP + H(+). Functionally, lectin-domain containing receptor kinase involved in salt stress response. Acts as a negative regulator of salt tolerance. The chain is L-type lectin-domain containing receptor kinase SIT2 from Oryza sativa subsp. japonica (Rice).